The following is a 376-amino-acid chain: UPF0284 protein glr4139 (376 aa).

This sequence belongs to the UPF0284 family.

The chain is UPF0284 protein glr4139 from Gloeobacter violaceus (strain ATCC 29082 / PCC 7421).